A 113-amino-acid polypeptide reads, in one-letter code: Small ribosomal subunit protein bS6 (113 aa).

Belongs to the bacterial ribosomal protein bS6 family.

Binds together with bS18 to 16S ribosomal RNA. The chain is Small ribosomal subunit protein bS6 from Buchnera aphidicola subsp. Schizaphis graminum (strain Sg).